Consider the following 575-residue polypeptide: Intermediate filament protein ifa-1 (575 aa).

2 disordered regions span residues 1–30 and 45–72; these read MMEITRETMSFTSTTPSARAPLGGRTTGNV and SGAGSGLSPFGQNAASTIRDSREREKKE. The head stretch occupies residues 1–72; the sequence is MMEITRETMS…RDSREREKKE (72 aa). Over residues 7 to 17 the composition is skewed to polar residues; the sequence is ETMSFTSTTPS. Residues 63–72 are compositionally biased toward basic and acidic residues; it reads RDSREREKKE. One can recognise an IF rod domain in the interval 69–422; the sequence is EKKEMSDLND…KMLEGEENRA (354 aa). Positions 73–104 are coil 1A; it reads MSDLNDRLASYIEKVRFLEAQNRKLAADLDAL. A linker 1 region spans residues 105–118; that stretch reads RSKWGKDTHNIRNM. The interval 119–256 is coil 1B; the sequence is YEGELVDAQK…RVHDNEIKEL (138 aa). A linker 12 region spans residues 257–274; sequence QTLASRDTTPENREFFKN. The tract at residues 275 to 422 is coil 2; that stretch reads ELSSAIRDIR…KMLEGEENRA (148 aa). A tail region spans residues 423–572; it reads GLKQLVEQVV…EERATHIQRQ (150 aa). An LTD domain is found at 455–572; sequence SRQSFQRSAK…EERATHIQRQ (118 aa).

This sequence belongs to the intermediate filament family. In terms of assembly, forms some heteromeric filaments with ifb-1. Isoform d is abundantly expressed in the marginal cells of the pharynx, forming apicobasally oriented thick filament bundles that are attached to the apical and basal plasma membrane by hemi-adherens junctions. Expression of isoform c is also seen in the excretory cells and in the uterus. Isoform c is detectable in the amphid sensory neurins and the pharyngeal-intestinal valve. Both isoform c and isoform d are expressed in the rectum and vulva and in some neurons of the tail. In larvae, expression is seen in the excretory cell, the vulva, the rectum and in the thick filament bundles of the pharynx. Expression in pharynx begins in late embryos.

It localises to the cytoplasm. In terms of biological role, cytoplasmic intermediate filaments make up the structural component of the cytoskeleton providing mechanical strength to cells. Essential protein required during embryogenesis especially for survival past the L1 larva stage, involved in intestine morphogenesis. This chain is Intermediate filament protein ifa-1 (ifa-1), found in Caenorhabditis elegans.